Here is a 405-residue protein sequence, read N- to C-terminus: Tryptophan synthase beta chain (405 aa).

Residue Lys98 is modified to N6-(pyridoxal phosphate)lysine.

The protein belongs to the TrpB family. As to quaternary structure, tetramer of two alpha and two beta chains. Requires pyridoxal 5'-phosphate as cofactor.

It catalyses the reaction (1S,2R)-1-C-(indol-3-yl)glycerol 3-phosphate + L-serine = D-glyceraldehyde 3-phosphate + L-tryptophan + H2O. It participates in amino-acid biosynthesis; L-tryptophan biosynthesis; L-tryptophan from chorismate: step 5/5. In terms of biological role, the beta subunit is responsible for the synthesis of L-tryptophan from indole and L-serine. The protein is Tryptophan synthase beta chain of Xanthomonas oryzae pv. oryzae (strain MAFF 311018).